Reading from the N-terminus, the 675-residue chain is UvrABC system protein B (675 aa).

A Helicase ATP-binding domain is found at 32–417 (EGLSDGLAYQ…EHAGQVVEQV (386 aa)). An ATP-binding site is contributed by 45–52 (GVTGSGKT). A Beta-hairpin motif is present at residues 98–121 (YYDYYQPEAYVPSRDLFIEKDSAI). Positions 436-602 (QVDDLMSEIN…QIKKQVKDII (167 aa)) constitute a Helicase C-terminal domain. Residues 634–669 (IKEIAKLEKAMQQAARDLQFEEAAVLRDRISNIKEN) enclose the UVR domain.

This sequence belongs to the UvrB family. As to quaternary structure, forms a heterotetramer with UvrA during the search for lesions. Interacts with UvrC in an incision complex.

It is found in the cytoplasm. The UvrABC repair system catalyzes the recognition and processing of DNA lesions. A damage recognition complex composed of 2 UvrA and 2 UvrB subunits scans DNA for abnormalities. Upon binding of the UvrA(2)B(2) complex to a putative damaged site, the DNA wraps around one UvrB monomer. DNA wrap is dependent on ATP binding by UvrB and probably causes local melting of the DNA helix, facilitating insertion of UvrB beta-hairpin between the DNA strands. Then UvrB probes one DNA strand for the presence of a lesion. If a lesion is found the UvrA subunits dissociate and the UvrB-DNA preincision complex is formed. This complex is subsequently bound by UvrC and the second UvrB is released. If no lesion is found, the DNA wraps around the other UvrB subunit that will check the other stand for damage. In Neisseria gonorrhoeae (strain ATCC 700825 / FA 1090), this protein is UvrABC system protein B.